An 87-amino-acid chain; its full sequence is uncharacterized protein (87 aa).

Positions 67 to 87 (TGGDPREAVVRPADQVEGYTG) are disordered.

This is an uncharacterized protein from Mycobacterium bovis (strain ATCC BAA-935 / AF2122/97).